A 241-amino-acid chain; its full sequence is Homeobox protein TGIF2LX (241 aa).

Disordered stretches follow at residues 1–56 (MEAA…PKGY) and 115–213 (RHGN…EYPD). Over residues 21 to 39 (AKTQSPAQDTSTVSRNSAD) the composition is skewed to polar residues. A DNA-binding region (homeobox; TALE-type) is located at residues 48–111 (EHTKKPKGYL…INARRRILPD (64 aa)).

This sequence belongs to the TALE/TGIF homeobox family.

The protein resides in the nucleus. In terms of biological role, may have a transcription role in testis. This Hylobates lar (Lar gibbon) protein is Homeobox protein TGIF2LX (TGIF2LX).